A 304-amino-acid chain; its full sequence is Aspartate carbamoyltransferase catalytic subunit (304 aa).

Carbamoyl phosphate contacts are provided by Arg-49 and Thr-50. Lys-77 contacts L-aspartate. Carbamoyl phosphate is bound by residues Arg-99, His-127, and Gln-130. Residues Arg-160 and Arg-211 each coordinate L-aspartate. Residues Ala-252 and Pro-253 each contribute to the carbamoyl phosphate site.

The protein belongs to the aspartate/ornithine carbamoyltransferase superfamily. ATCase family. In terms of assembly, heterododecamer (2C3:3R2) of six catalytic PyrB chains organized as two trimers (C3), and six regulatory PyrI chains organized as three dimers (R2).

The catalysed reaction is carbamoyl phosphate + L-aspartate = N-carbamoyl-L-aspartate + phosphate + H(+). The protein operates within pyrimidine metabolism; UMP biosynthesis via de novo pathway; (S)-dihydroorotate from bicarbonate: step 2/3. Functionally, catalyzes the condensation of carbamoyl phosphate and aspartate to form carbamoyl aspartate and inorganic phosphate, the committed step in the de novo pyrimidine nucleotide biosynthesis pathway. The chain is Aspartate carbamoyltransferase catalytic subunit from Bacillus cytotoxicus (strain DSM 22905 / CIP 110041 / 391-98 / NVH 391-98).